The chain runs to 808 residues: Sucrose synthase 1 (808 aa).

Positions 277-754 (MVFNVVILSP…GLQRIEEKYT (478 aa)) are GT-B glycosyltransferase.

The protein belongs to the glycosyltransferase 1 family. Plant sucrose synthase subfamily. Homotetramer. Expressed in the phloem of leaves and in roots. Detected in the whole plant but more precisely confined to the vasculature in cotyledons, mature leaves and siliques.

It catalyses the reaction an NDP-alpha-D-glucose + D-fructose = a ribonucleoside 5'-diphosphate + sucrose + H(+). Its function is as follows. Sucrose-cleaving enzyme that provides UDP-glucose and fructose for various metabolic pathways. This chain is Sucrose synthase 1 (SUS1), found in Arabidopsis thaliana (Mouse-ear cress).